The chain runs to 393 residues: Thyrotropin-releasing hormone receptor (393 aa).

Over 1 to 28 (MENDTVSEMNQTELQPQAAVALEYQVVT) the chain is Extracellular. 2 N-linked (GlcNAc...) asparagine glycosylation sites follow: N3 and N10. The helical transmembrane segment at 29 to 51 (ILLVVIICGLGIVGNIMVVLVVM) threads the bilayer. Topologically, residues 52–61 (RTKHMRTPTN) are cytoplasmic. The helical transmembrane segment at 62 to 83 (CYLVSLAVADLMVLVAAGLPNI) threads the bilayer. The Extracellular segment spans residues 84–99 (TDSIYGSWVYGYVGCL). C98 and C179 are disulfide-bonded. A helical membrane pass occupies residues 100–121 (CITYLQYLGINASSCSITAFTI). Residues 122-144 (ERYIAICHPIKAQFLCTFSRAKK) lie on the Cytoplasmic side of the membrane. Residues 145 to 168 (IIIFVWAFTSIYCMLWFFLLDLNI) traverse the membrane as a helical segment. The Extracellular portion of the chain corresponds to 169–193 (STYKNAVVVSCGYKISRNYYSPIYL). A helical transmembrane segment spans residues 194–215 (MDFGVFYVVPMILATVLYGFIA). At 216–266 (RILFLNPIPSDPKENSKMWKNDSIHQNKNLNLNATNRCFNSTVSSRKQVTK) the chain is on the cytoplasmic side. A helical transmembrane segment spans residues 267 to 288 (MLAVVVILFALLWMPYRTLVVV). Topologically, residues 289–296 (NSFLSSPF) are extracellular. A helical membrane pass occupies residues 297-319 (QENWFLLFCRICIYLNSAINPVI). Over 320-393 (YNLMSQKFRA…FDDTCLASEN (74 aa)) the chain is Cytoplasmic.

This sequence belongs to the G-protein coupled receptor 1 family.

Its subcellular location is the cell membrane. Receptor for thyrotropin-releasing hormone (TRH). Upon ligand binding, this G-protein-coupled receptor triggers activation of the phosphatidylinositol (IP3)-calcium-protein kinase C (PKC) pathway. In Mus musculus (Mouse), this protein is Thyrotropin-releasing hormone receptor (Trhr).